Reading from the N-terminus, the 252-residue chain is MACSPLEQFAIIQLIPIHIGNLYFSFTNSSLFMLLTISLVLLLVHFVTLNGGNLVPNAWQSFVEMIYDFVLNLVNEQISGASSVKQRFFPLIYVTFTFLLFCNLIGMIPYSFTVTSHFIITLGLSFSLFIGITIVGFQTHGLHFFSILLPQGVPLPLAPFLVLLELISYCFRALSLGIRLFANMMAGHSLVKILSGFAWTMLSMGGILYLGQLAPFFIVFALTGLELGVAILQAYVFTILLCIYLNDAINLH.

A run of 7 helical transmembrane segments spans residues 6 to 26, 31 to 51, 88 to 108, 117 to 137, 144 to 164, 190 to 212, and 225 to 245; these read LEQFAIIQLIPIHIGNLYFSF, LFMLLTISLVLLLVHFVTLNG, FFPLIYVTFTFLLFCNLIGMI, HFIITLGLSFSLFIGITIVGF, FFSILLPQGVPLPLAPFLVLL, LVKILSGFAWTMLSMGGILYLGQ, and LELGVAILQAYVFTILLCIYL.

It belongs to the ATPase A chain family. F-type ATPases have 2 components, CF(1) - the catalytic core - and CF(0) - the membrane proton channel. CF(1) has five subunits: alpha(3), beta(3), gamma(1), delta(1), epsilon(1). CF(0) has three main subunits: a, b and c.

It is found in the mitochondrion inner membrane. Its function is as follows. Mitochondrial membrane ATP synthase (F(1)F(0) ATP synthase or Complex V) produces ATP from ADP in the presence of a proton gradient across the membrane which is generated by electron transport complexes of the respiratory chain. F-type ATPases consist of two structural domains, F(1) - containing the extramembraneous catalytic core and F(0) - containing the membrane proton channel, linked together by a central stalk and a peripheral stalk. During catalysis, ATP synthesis in the catalytic domain of F(1) is coupled via a rotary mechanism of the central stalk subunits to proton translocation. Key component of the proton channel; it may play a direct role in the translocation of protons across the membrane. The polypeptide is ATP synthase subunit a (ATP6) (Marchantia polymorpha (Common liverwort)).